The chain runs to 74 residues: UPF0346 protein RBAM_019500 (74 aa).

The protein belongs to the UPF0346 family.

This is UPF0346 protein RBAM_019500 from Bacillus velezensis (strain DSM 23117 / BGSC 10A6 / LMG 26770 / FZB42) (Bacillus amyloliquefaciens subsp. plantarum).